We begin with the raw amino-acid sequence, 226 residues long: Protease RseP (226 aa).

The PDZ domain maps to 1-56; sequence VEKVIPGSAAEKAGLQKGDRIVKVGSQEIDVWHTFTSFVSNNPNVPLELSVDRAGH. The next 2 helical transmembrane spans lie at 152-174 and 202-221; these read LVYY…LIPL and FSYR…ALFN.

This sequence belongs to the peptidase M50B family. Interacts with RseA. Requires Zn(2+) as cofactor.

The protein resides in the cell inner membrane. In terms of biological role, a site-2 regulated intramembrane protease (S2P) that cleaves the peptide bond between 'Ala-108' and 'Cys-109' in the transmembrane region of RseA. Part of a regulated intramembrane proteolysis (RIP) cascade. Acts on DegS-cleaved RseA to release the cytoplasmic domain of RseA. This provides the cell with sigma-E (RpoE) activity through the proteolysis of RseA. The protein is Protease RseP (rseP) of Photorhabdus luminescens (Xenorhabdus luminescens).